A 410-amino-acid chain; its full sequence is Aspartic proteinase Asp1 (410 aa).

The first 23 residues, 1–23 (MTARLALLASLLLLLQLVPPSSA), serve as a signal peptide directing secretion. Positions 24–46 (VVLELHGNVYPIGHFFITMNIGD) are cleaved as a propeptide — removed in mature form. In terms of domain architecture, Peptidase A1 spans 38-392 (FFITMNIGDP…DSERSLLGWV (355 aa)). Active-site residues include Asp56 and Asp257.

The protein belongs to the peptidase A1 family.

This Oryza sativa subsp. japonica (Rice) protein is Aspartic proteinase Asp1 (ASP1).